Reading from the N-terminus, the 340-residue chain is Glycerol-3-phosphate dehydrogenase [NAD(P)+] (340 aa).

4 residues coordinate NADPH: Ser14, Phe15, Arg35, and Lys108. Positions 108 and 136 each coordinate sn-glycerol 3-phosphate. Ala140 contacts NADPH. Positions 191, 244, 254, 255, and 256 each coordinate sn-glycerol 3-phosphate. Lys191 acts as the Proton acceptor in catalysis. Residue Arg255 participates in NADPH binding. NADPH-binding residues include Val279 and Glu281.

Belongs to the NAD-dependent glycerol-3-phosphate dehydrogenase family.

It localises to the cytoplasm. It carries out the reaction sn-glycerol 3-phosphate + NAD(+) = dihydroxyacetone phosphate + NADH + H(+). The enzyme catalyses sn-glycerol 3-phosphate + NADP(+) = dihydroxyacetone phosphate + NADPH + H(+). It participates in membrane lipid metabolism; glycerophospholipid metabolism. Functionally, catalyzes the reduction of the glycolytic intermediate dihydroxyacetone phosphate (DHAP) to sn-glycerol 3-phosphate (G3P), the key precursor for phospholipid synthesis. This is Glycerol-3-phosphate dehydrogenase [NAD(P)+] from Ectopseudomonas mendocina (strain ymp) (Pseudomonas mendocina).